A 502-amino-acid polypeptide reads, in one-letter code: Glycerol kinase (502 aa).

T14 lines the ADP pocket. Positions 14, 15, and 16 each coordinate ATP. Residue T14 coordinates sn-glycerol 3-phosphate. ADP is bound at residue R18. 4 residues coordinate sn-glycerol 3-phosphate: R84, E85, Y136, and D246. The glycerol site is built by R84, E85, Y136, D246, and Q247. ADP is bound by residues T268 and G311. ATP is bound by residues T268, G311, Q315, and G412. G412 and N416 together coordinate ADP.

Belongs to the FGGY kinase family. In terms of assembly, homotetramer and homodimer (in equilibrium). Heterodimer with EIIA-Glc. Binds 1 zinc ion per glycerol kinase EIIA-Glc dimer. The zinc ion is important for dimerization.

It carries out the reaction glycerol + ATP = sn-glycerol 3-phosphate + ADP + H(+). Its pathway is polyol metabolism; glycerol degradation via glycerol kinase pathway; sn-glycerol 3-phosphate from glycerol: step 1/1. Its activity is regulated as follows. Activity of this regulatory enzyme is affected by several metabolites. Allosterically and non-competitively inhibited by fructose 1,6-bisphosphate (FBP) and unphosphorylated phosphocarrier protein EIIA-Glc (III-Glc), an integral component of the bacterial phosphotransferase (PTS) system. In terms of biological role, key enzyme in the regulation of glycerol uptake and metabolism. Catalyzes the phosphorylation of glycerol to yield sn-glycerol 3-phosphate. In Shigella dysenteriae serotype 1 (strain Sd197), this protein is Glycerol kinase.